A 93-amino-acid chain; its full sequence is Cobalt transport protein CbiN (93 aa).

2 consecutive transmembrane segments (helical) span residues 5–25 and 63–83; these read LMLL…NHGG and LLFT…LGYC.

It belongs to the CbiN family. As to quaternary structure, forms an energy-coupling factor (ECF) transporter complex composed of an ATP-binding protein (A component, CbiO), a transmembrane protein (T component, CbiQ) and 2 possible substrate-capture proteins (S components, CbiM and CbiN) of unknown stoichimetry.

Its subcellular location is the cell inner membrane. Its pathway is cofactor biosynthesis; adenosylcobalamin biosynthesis. Functionally, part of the energy-coupling factor (ECF) transporter complex CbiMNOQ involved in cobalt import. This chain is Cobalt transport protein CbiN, found in Salmonella arizonae (strain ATCC BAA-731 / CDC346-86 / RSK2980).